We begin with the raw amino-acid sequence, 453 residues long: Bifunctional protein GlmU (453 aa).

Residues 1-225 (MNIVILAAGT…EWETLGVNSK (225 aa)) are pyrophosphorylase. Residues 6–9 (LAAG), Lys-20, Gln-71, 76–77 (GT), 98–100 (YGD), Gly-135, Glu-150, Asn-165, and Asn-223 each bind UDP-N-acetyl-alpha-D-glucosamine. A Mg(2+)-binding site is contributed by Asp-100. Asn-223 lines the Mg(2+) pocket. The segment at 226–246 (AQLAELERIHQRNVADALLVD) is linker. An N-acetyltransferase region spans residues 247-453 (GVTLADPARV…GYVRPVKKKS (207 aa)). UDP-N-acetyl-alpha-D-glucosamine is bound by residues Arg-329 and Lys-347. Catalysis depends on His-359, which acts as the Proton acceptor. UDP-N-acetyl-alpha-D-glucosamine contacts are provided by Tyr-362 and Asn-373. Residues Ala-376, 382-383 (NY), Ser-401, and Ala-419 contribute to the acetyl-CoA site.

This sequence in the N-terminal section; belongs to the N-acetylglucosamine-1-phosphate uridyltransferase family. The protein in the C-terminal section; belongs to the transferase hexapeptide repeat family. In terms of assembly, homotrimer. The cofactor is Mg(2+).

Its subcellular location is the cytoplasm. The catalysed reaction is alpha-D-glucosamine 1-phosphate + acetyl-CoA = N-acetyl-alpha-D-glucosamine 1-phosphate + CoA + H(+). It carries out the reaction N-acetyl-alpha-D-glucosamine 1-phosphate + UTP + H(+) = UDP-N-acetyl-alpha-D-glucosamine + diphosphate. It participates in nucleotide-sugar biosynthesis; UDP-N-acetyl-alpha-D-glucosamine biosynthesis; N-acetyl-alpha-D-glucosamine 1-phosphate from alpha-D-glucosamine 6-phosphate (route II): step 2/2. Its pathway is nucleotide-sugar biosynthesis; UDP-N-acetyl-alpha-D-glucosamine biosynthesis; UDP-N-acetyl-alpha-D-glucosamine from N-acetyl-alpha-D-glucosamine 1-phosphate: step 1/1. The protein operates within bacterial outer membrane biogenesis; LPS lipid A biosynthesis. In terms of biological role, catalyzes the last two sequential reactions in the de novo biosynthetic pathway for UDP-N-acetylglucosamine (UDP-GlcNAc). The C-terminal domain catalyzes the transfer of acetyl group from acetyl coenzyme A to glucosamine-1-phosphate (GlcN-1-P) to produce N-acetylglucosamine-1-phosphate (GlcNAc-1-P), which is converted into UDP-GlcNAc by the transfer of uridine 5-monophosphate (from uridine 5-triphosphate), a reaction catalyzed by the N-terminal domain. This Burkholderia orbicola (strain MC0-3) protein is Bifunctional protein GlmU.